We begin with the raw amino-acid sequence, 251 residues long: uncharacterized protein (251 aa).

Residue 12 to 36 (VVTGASSGIGEATARTLAAQGFHVV) coordinates NADP(+). Ser-136 contacts substrate. The active-site Proton acceptor is the Tyr-149.

This sequence belongs to the short-chain dehydrogenases/reductases (SDR) family.

This is an uncharacterized protein from Mycobacterium tuberculosis (strain CDC 1551 / Oshkosh).